The following is a 336-amino-acid chain: DNA-directed RNA polymerase subunit alpha (336 aa).

The alpha N-terminal domain (alpha-NTD) stretch occupies residues 1-238 (MNDLDLNLVP…NLFLPFLQAE (238 aa)). Positions 267 to 336 (AKKVTFQHIF…LQKRFGMRLQ (70 aa)) are alpha C-terminal domain (alpha-CTD).

The protein belongs to the RNA polymerase alpha chain family. In plastids the minimal PEP RNA polymerase catalytic core is composed of four subunits: alpha, beta, beta', and beta''. When a (nuclear-encoded) sigma factor is associated with the core the holoenzyme is formed, which can initiate transcription.

It is found in the plastid. The protein localises to the chloroplast. The enzyme catalyses RNA(n) + a ribonucleoside 5'-triphosphate = RNA(n+1) + diphosphate. In terms of biological role, DNA-dependent RNA polymerase catalyzes the transcription of DNA into RNA using the four ribonucleoside triphosphates as substrates. The polypeptide is DNA-directed RNA polymerase subunit alpha (Huperzia lucidula (Shining clubmoss)).